The following is a 369-amino-acid chain: UDP-N-acetylglucosamine--N-acetylmuramyl-(pentapeptide) pyrophosphoryl-undecaprenol N-acetylglucosamine transferase (369 aa).

Residues 16-18 (TGG), Asn130, Arg171, Ser196, and Gln297 each bind UDP-N-acetyl-alpha-D-glucosamine.

Belongs to the glycosyltransferase 28 family. MurG subfamily.

The protein localises to the cell inner membrane. It catalyses the reaction di-trans,octa-cis-undecaprenyl diphospho-N-acetyl-alpha-D-muramoyl-L-alanyl-D-glutamyl-meso-2,6-diaminopimeloyl-D-alanyl-D-alanine + UDP-N-acetyl-alpha-D-glucosamine = di-trans,octa-cis-undecaprenyl diphospho-[N-acetyl-alpha-D-glucosaminyl-(1-&gt;4)]-N-acetyl-alpha-D-muramoyl-L-alanyl-D-glutamyl-meso-2,6-diaminopimeloyl-D-alanyl-D-alanine + UDP + H(+). The protein operates within cell wall biogenesis; peptidoglycan biosynthesis. Cell wall formation. Catalyzes the transfer of a GlcNAc subunit on undecaprenyl-pyrophosphoryl-MurNAc-pentapeptide (lipid intermediate I) to form undecaprenyl-pyrophosphoryl-MurNAc-(pentapeptide)GlcNAc (lipid intermediate II). This chain is UDP-N-acetylglucosamine--N-acetylmuramyl-(pentapeptide) pyrophosphoryl-undecaprenol N-acetylglucosamine transferase, found in Desulfotalea psychrophila (strain LSv54 / DSM 12343).